We begin with the raw amino-acid sequence, 1413 residues long: DNA-directed RNA polymerase subunit beta' (1413 aa).

Residues C72, C74, C87, and C90 each contribute to the Zn(2+) site. D463, D465, and D467 together coordinate Mg(2+). Residues C811, C885, C892, and C895 each coordinate Zn(2+).

This sequence belongs to the RNA polymerase beta' chain family. As to quaternary structure, the RNAP catalytic core consists of 2 alpha, 1 beta, 1 beta' and 1 omega subunit. When a sigma factor is associated with the core the holoenzyme is formed, which can initiate transcription. Requires Mg(2+) as cofactor. Zn(2+) serves as cofactor.

It catalyses the reaction RNA(n) + a ribonucleoside 5'-triphosphate = RNA(n+1) + diphosphate. DNA-dependent RNA polymerase catalyzes the transcription of DNA into RNA using the four ribonucleoside triphosphates as substrates. The sequence is that of DNA-directed RNA polymerase subunit beta' from Ruegeria pomeroyi (strain ATCC 700808 / DSM 15171 / DSS-3) (Silicibacter pomeroyi).